The primary structure comprises 377 residues: Nitric oxide reductase FlRd-NAD(+) reductase (377 aa).

It belongs to the FAD-dependent oxidoreductase family. The cofactor is FAD.

Its subcellular location is the cytoplasm. The catalysed reaction is 2 reduced [nitric oxide reductase rubredoxin domain] + NAD(+) + H(+) = 2 oxidized [nitric oxide reductase rubredoxin domain] + NADH. It participates in nitrogen metabolism; nitric oxide reduction. Its function is as follows. One of at least two accessory proteins for anaerobic nitric oxide (NO) reductase. Reduces the rubredoxin moiety of NO reductase. The polypeptide is Nitric oxide reductase FlRd-NAD(+) reductase (Salmonella arizonae (strain ATCC BAA-731 / CDC346-86 / RSK2980)).